Consider the following 81-residue polypeptide: Photosystem I iron-sulfur center (81 aa).

2 4Fe-4S ferredoxin-type domains span residues 2–31 (AHTV…MVPW) and 39–68 (IASA…IRVY). Cysteine 11, cysteine 14, cysteine 17, cysteine 21, cysteine 48, cysteine 51, cysteine 54, and cysteine 58 together coordinate [4Fe-4S] cluster.

The eukaryotic PSI reaction center is composed of at least 11 subunits. It depends on [4Fe-4S] cluster as a cofactor.

It localises to the plastid. The protein localises to the cyanelle thylakoid membrane. The enzyme catalyses reduced [plastocyanin] + hnu + oxidized [2Fe-2S]-[ferredoxin] = oxidized [plastocyanin] + reduced [2Fe-2S]-[ferredoxin]. In terms of biological role, apoprotein for the two 4Fe-4S centers FA and FB of photosystem I (PSI); essential for photochemical activity. FB is the terminal electron acceptor of PSI, donating electrons to ferredoxin. The C-terminus interacts with PsaA/B/D and helps assemble the protein into the PSI complex. Required for binding of PsaD and PsaE to PSI. PSI is a cytochrome c6-ferredoxin oxidoreductase, converting photonic excitation into a charge separation, which transfers an electron from the donor P700 chlorophyll pair to the spectroscopically characterized acceptors A0, A1, FX, FA and FB in turn. This is Photosystem I iron-sulfur center from Cyanophora paradoxa.